A 549-amino-acid polypeptide reads, in one-letter code: Chaperonin GroEL (549 aa).

ATP-binding positions include 30 to 33 (TLGP), Lys51, 87 to 91 (DGTTT), Gly415, and Asp496.

Belongs to the chaperonin (HSP60) family. Forms a cylinder of 14 subunits composed of two heptameric rings stacked back-to-back. Interacts with the co-chaperonin GroES.

The protein resides in the cytoplasm. It carries out the reaction ATP + H2O + a folded polypeptide = ADP + phosphate + an unfolded polypeptide.. Its function is as follows. Together with its co-chaperonin GroES, plays an essential role in assisting protein folding. The GroEL-GroES system forms a nano-cage that allows encapsulation of the non-native substrate proteins and provides a physical environment optimized to promote and accelerate protein folding. This Acidiphilium cryptum (strain JF-5) protein is Chaperonin GroEL.